A 305-amino-acid chain; its full sequence is Ribonuclease BN (305 aa).

Zn(2+)-binding residues include H64, H66, D68, H69, H141, D212, and H270. D68 (proton acceptor) is an active-site residue.

This sequence belongs to the RNase Z family. RNase BN subfamily. In terms of assembly, homodimer. Zn(2+) is required as a cofactor.

Zinc phosphodiesterase, which has both exoribonuclease and endoribonuclease activities. This Salmonella agona (strain SL483) protein is Ribonuclease BN.